The primary structure comprises 108 residues: Glutaredoxin-C10 (108 aa).

Residues 1-107 (MERVAKLASE…PMLKNAGALW (107 aa)) form the Glutaredoxin domain. The cysteines at positions 21 and 24 are disulfide-linked. Positions 105–108 (ALWL) match the Responsive for interaction with TGA factors motif.

Belongs to the glutaredoxin family. CC-type subfamily.

The protein localises to the cytoplasm. It is found in the nucleus. Has a glutathione-disulfide oxidoreductase activity in the presence of NADPH and glutathione reductase. Reduces low molecular weight disulfides and proteins. This is Glutaredoxin-C10 (GRXC10) from Oryza sativa subsp. japonica (Rice).